Here is a 299-residue protein sequence, read N- to C-terminus: Recombination-associated protein RdgC (299 aa).

Belongs to the RdgC family.

It localises to the cytoplasm. Its subcellular location is the nucleoid. May be involved in recombination. The chain is Recombination-associated protein RdgC from Bordetella parapertussis (strain 12822 / ATCC BAA-587 / NCTC 13253).